A 113-amino-acid chain; its full sequence is Ribonuclease P protein component (113 aa).

The span at 1 to 10 (MLPTRHRMRT) shows a compositional bias: basic residues. Residues 1-23 (MLPTRHRMRTSAHFSTTVRSGAR) are disordered.

It belongs to the RnpA family. As to quaternary structure, consists of a catalytic RNA component (M1 or rnpB) and a protein subunit.

It carries out the reaction Endonucleolytic cleavage of RNA, removing 5'-extranucleotides from tRNA precursor.. In terms of biological role, RNaseP catalyzes the removal of the 5'-leader sequence from pre-tRNA to produce the mature 5'-terminus. It can also cleave other RNA substrates such as 4.5S RNA. The protein component plays an auxiliary but essential role in vivo by binding to the 5'-leader sequence and broadening the substrate specificity of the ribozyme. The sequence is that of Ribonuclease P protein component from Kocuria rhizophila (strain ATCC 9341 / DSM 348 / NBRC 103217 / DC2201).